Consider the following 275-residue polypeptide: MGEFYHELTLSPSSYLELFSDFLLEATGEGIEEEGNSIIVRSDQDLSWLIEALQEFCQTLSARVSEEVNFSHSLTWKRNEDWIERYRQSIQPIECAPFYVRPSWHPPKPDLIDLLIDPALAFGSGHHGTTNGCLACLGALELEGKRVLDVGCGSGILAIASAKKGAIVEMCDTDELAVGEALKNASLNQVIASKVWIGSVGDAEGEYDLIIANILAAILIMLSPWLKERLKPGARLILSGILGPYKEDVLRKFGGFTLEKELLCEEWVTLQLRKN.

Residues Thr130, Gly151, Asp172, and Asn213 each contribute to the S-adenosyl-L-methionine site.

Belongs to the methyltransferase superfamily. PrmA family.

It localises to the cytoplasm. It catalyses the reaction L-lysyl-[protein] + 3 S-adenosyl-L-methionine = N(6),N(6),N(6)-trimethyl-L-lysyl-[protein] + 3 S-adenosyl-L-homocysteine + 3 H(+). In terms of biological role, methylates ribosomal protein L11. The polypeptide is Ribosomal protein L11 methyltransferase (Wolinella succinogenes (strain ATCC 29543 / DSM 1740 / CCUG 13145 / JCM 31913 / LMG 7466 / NCTC 11488 / FDC 602W) (Vibrio succinogenes)).